Consider the following 132-residue polypeptide: Aspartate 1-decarboxylase (132 aa).

Ser-25 serves as the catalytic Schiff-base intermediate with substrate; via pyruvic acid. Ser-25 bears the Pyruvic acid (Ser) mark. Thr-57 is a binding site for substrate. Tyr-58 functions as the Proton donor in the catalytic mechanism. Residue 73–75 (GAA) coordinates substrate.

The protein belongs to the PanD family. As to quaternary structure, heterooctamer of four alpha and four beta subunits. The cofactor is pyruvate. In terms of processing, is synthesized initially as an inactive proenzyme, which is activated by self-cleavage at a specific serine bond to produce a beta-subunit with a hydroxyl group at its C-terminus and an alpha-subunit with a pyruvoyl group at its N-terminus.

Its subcellular location is the cytoplasm. The enzyme catalyses L-aspartate + H(+) = beta-alanine + CO2. The protein operates within cofactor biosynthesis; (R)-pantothenate biosynthesis; beta-alanine from L-aspartate: step 1/1. Its function is as follows. Catalyzes the pyruvoyl-dependent decarboxylation of aspartate to produce beta-alanine. The polypeptide is Aspartate 1-decarboxylase (Geotalea uraniireducens (strain Rf4) (Geobacter uraniireducens)).